Reading from the N-terminus, the 488-residue chain is Prostaglandin E2 receptor EP4 subtype (488 aa).

Residues 1-19 (MSTPGVNSSASLSPDRLNS) are Extracellular-facing. N7 carries N-linked (GlcNAc...) asparagine glycosylation. The chain crosses the membrane as a helical span at residues 20–43 (PVTIPAVMFIFGVVGNLVAIVVLC). Residues 44 to 55 (KSRKEQKETTFY) lie on the Cytoplasmic side of the membrane. The helical transmembrane segment at 56-79 (TLVCGLAVTDLLGTLLVSPVTIAT) threads the bilayer. Residues 80-96 (YMKGQWPGGQPLCEYST) are Extracellular-facing. Residues C92 and C170 are joined by a disulfide bond. The helical transmembrane segment at 97-115 (FILLFFSLSGLSIICAMSV) threads the bilayer. At 116 to 135 (ERYLAINHAYFYSHYVDKRL) the chain is on the cytoplasmic side. The chain crosses the membrane as a helical span at residues 136–160 (AGLTLFAVYASNVLFCALPNMGLGS). The Extracellular segment spans residues 161–184 (SRLQYPDTWCFIDWTTNVTAHAAY). Residues 185–211 (SYMYAGFSSFLILATVLCNVLVCGALL) traverse the membrane as a helical segment. Residues 212 to 267 (RMHRQFMRRTSLGTEQHHAAAAASVASRGHPAASPALPRLSDFRRRRSFRRIAGAE) lie on the Cytoplasmic side of the membrane. A helical transmembrane segment spans residues 268 to 295 (IQMVILLIATSLVVLICSIPLVVRVFVN). The Extracellular segment spans residues 296-312 (QLYQPSLEREVSKNPDL). A helical transmembrane segment spans residues 313-332 (QAIRIASVNPILDPWIYILL). Topologically, residues 333-488 (RKTVLSKAIE…ETLNLSEKCI (156 aa)) are cytoplasmic. Residues 356 to 376 (RERSGQHCSDSQRTSSAMSGH) form a disordered region. The segment covering 361 to 376 (QHCSDSQRTSSAMSGH) has biased composition (polar residues). A phosphoserine mark is found at S374, S377, S379, and S382. Residues 437-449 (SETSDSSQGQDSE) show a composition bias toward polar residues. Residues 437–475 (SETSDSSQGQDSESVLLVDEAGGSGRAGPAPKGSSLQVT) form a disordered region.

It belongs to the G-protein coupled receptor 1 family. Interacts with FEM1A. Phosphorylation mediates agonist-mediated desensitization by promoting cytoplasmic retention. High in intestine and in peripheral blood mononuclear cells; low in lung, kidney, thymus, uterus, vasculature and brain. Not found in liver, heart, retina oe skeletal muscle.

The protein localises to the cell membrane. Receptor for prostaglandin E2 (PGE2). The activity of this receptor is mediated by G(s) proteins that stimulate adenylate cyclase. Has a relaxing effect on smooth muscle. May play an important role in regulating renal hemodynamics, intestinal epithelial transport, adrenal aldosterone secretion, and uterine function. This Homo sapiens (Human) protein is Prostaglandin E2 receptor EP4 subtype (PTGER4).